Here is a 173-residue protein sequence, read N- to C-terminus: uncharacterized protein (173 aa).

In terms of domain architecture, N-acetyltransferase spans 4 to 173 (VKIVQVSEKD…TDFLLKKALV (170 aa)). Acetyl-CoA-binding positions include 97–99 (IYL), 106–110 (RGLGK), and 136–138 (NEN).

This is an uncharacterized protein from Lactobacillus delbrueckii subsp. lactis.